An 81-amino-acid chain; its full sequence is A-kinase anchor protein 7 isoform alpha (81 aa).

Gly-2 carries N-myristoyl glycine lipidation. The interval 2–11 is required for membrane localization; the sequence is GQLCCFPFAR. 2 S-palmitoyl cysteine lipidation sites follow: Cys-5 and Cys-6. Positions 29-42 are RII-binding; sequence LVRLSKRLVENAVL. The segment at 49 to 81 is disordered; the sequence is LEETQNKKQPGEGNSTKAEEGDRNGDGSDNNRK. Basic and acidic residues predominate over residues 65–81; sequence KAEEGDRNGDGSDNNRK.

In terms of assembly, binds cAMP-dependent protein kinase (PKA). Interacts with PRKCA; only the cytoplasmic form is capable of interacting with PRKCA.

It localises to the lateral cell membrane. In terms of biological role, targets the cAMP-dependent protein kinase (PKA) to the plasma membrane, and permits functional coupling to the L-type calcium channel. The membrane-associated form reduces epithelial sodium channel (ENaC) activity, whereas the free cytoplasmic form may negatively regulate ENaC channel feedback inhibition by intracellular sodium. This is A-kinase anchor protein 7 isoform alpha (Akap7) from Mus musculus (Mouse).